Consider the following 187-residue polypeptide: Decorin-binding protein B (187 aa).

An N-terminal signal peptide occupies residues 1–20; the sequence is MKIGKLNSIVIALFFKLLVA.

Belongs to the decorin-binding protein family.

Functionally, binds to decorin which may mediate the adherence of B.burgdorferi to collagen fibers in skin and other tissues. The sequence is that of Decorin-binding protein B (dbpB) from Borreliella burgdorferi (strain ATCC 35210 / DSM 4680 / CIP 102532 / B31) (Borrelia burgdorferi).